The chain runs to 428 residues: MTMTTTISHLPTELLDEIISRVPLKSTRAVRLTCKNWDSLFKNRSFMKEEAAAKEGESRMIVLMDKNLFAMSIFFNGIDIDPSAEQRGKLTCLYDDSEQVKISQVFHCEGLLLCVLEDDKCSLVVWNPYWGQTRWIEPRYFSRIQNCYGRYMYVYALGYNNKSRSHKILRFIDGAFDFPFWYEIYDFDSDLWTTLDVTPQWFINFPPRGCYNRGVTLKGNTYWCAIRRKSNTNWFVDLDHIICFDFTSERFGPLMPLPFVRYTSGSLVTLSCVREEKLAVLFCNNATVEVWITTKIETDKISWSKFLTVNMYVDLLEGSFFIDEVKKVAMIFDIPMNRETVYIVGEAGNVKELHLGQPVDVDKHFSPLFVCSYVPSLVQIKQPPGCQRKQESSLEKRRCDDENISRLIAHEETYVVYGRYVPSRKKPR.

The 47-residue stretch at 4–50 folds into the F-box domain; it reads TTTISHLPTELLDEIISRVPLKSTRAVRLTCKNWDSLFKNRSFMKEE.

The polypeptide is Putative F-box protein At3g22421 (Arabidopsis thaliana (Mouse-ear cress)).